Reading from the N-terminus, the 742-residue chain is Polyphosphate kinase (742 aa).

Asn91 contacts ATP. Residues Arg431 and Arg461 each contribute to the Mg(2+) site. The active-site Phosphohistidine intermediate is His491. The ATP site is built by Tyr524, Arg624, and His652. Positions 718–742 (WTASPQEGHSVRDHQESLMERHRSP) are disordered. Residues 726 to 742 (HSVRDHQESLMERHRSP) are compositionally biased toward basic and acidic residues.

Belongs to the polyphosphate kinase 1 (PPK1) family. Requires Mg(2+) as cofactor. In terms of processing, an intermediate of this reaction is the autophosphorylated ppk in which a phosphate is covalently linked to a histidine residue through a N-P bond.

It carries out the reaction [phosphate](n) + ATP = [phosphate](n+1) + ADP. Its function is as follows. Catalyzes the reversible transfer of the terminal phosphate of ATP to form a long-chain polyphosphate (polyP). This is Polyphosphate kinase from Mycobacterium bovis (strain ATCC BAA-935 / AF2122/97).